A 306-amino-acid polypeptide reads, in one-letter code: D-alanine--D-alanine ligase (306 aa).

Positions 101-300 constitute an ATP-grasp domain; that stretch reads RIMLAAAGVP…FGELVTWMVE (200 aa). ATP is bound at residue 128-182; that stretch reads MPTPYVLKPNAGGSSVGVFIVREDQAHPPQELTREDWPHGENLLAEEFIPGLELT. Residues D250, E267, and N269 each contribute to the Mg(2+) site.

Belongs to the D-alanine--D-alanine ligase family. Mg(2+) serves as cofactor. The cofactor is Mn(2+).

It localises to the cytoplasm. It carries out the reaction 2 D-alanine + ATP = D-alanyl-D-alanine + ADP + phosphate + H(+). Its pathway is cell wall biogenesis; peptidoglycan biosynthesis. In terms of biological role, cell wall formation. In Xanthobacter autotrophicus (strain ATCC BAA-1158 / Py2), this protein is D-alanine--D-alanine ligase.